The chain runs to 177 residues: MSRVAKNPVKLPSGVEVKFAGQQLSVKGAKGTLELNVHSSVEVTEESGELRFVARNGDQQARAMAGTTRALVNNMVQGVSQGFERKLQLVGVGYKAQAKGTVLNLALGFSHPVDYELPAGITAETPSQTDILIKGIDKQLVGQVAAEIRDFRPPEPYKGKGVRYADEVVRRKEAKKK.

It belongs to the universal ribosomal protein uL6 family. Part of the 50S ribosomal subunit.

In terms of biological role, this protein binds to the 23S rRNA, and is important in its secondary structure. It is located near the subunit interface in the base of the L7/L12 stalk, and near the tRNA binding site of the peptidyltransferase center. In Pseudomonas putida (strain ATCC 700007 / DSM 6899 / JCM 31910 / BCRC 17059 / LMG 24140 / F1), this protein is Large ribosomal subunit protein uL6.